A 106-amino-acid polypeptide reads, in one-letter code: uncharacterized protein (106 aa).

This is an uncharacterized protein from Invertebrate iridescent virus 3 (IIV-3).